A 381-amino-acid chain; its full sequence is Chaperone protein DnaJ (381 aa).

The J domain maps to 5-70 (DYYEVLGCDR…QKRGAYDRYG (66 aa)). Residues 136 to 214 (GKTAQISIPT…CGGAGRVTRE (79 aa)) form a CR-type zinc finger. C149, C152, C166, C169, C188, C191, C202, and C205 together coordinate Zn(2+). CXXCXGXG motif repeat units follow at residues 149 to 156 (CEVCSGSG), 166 to 173 (CRTCNGAG), 188 to 195 (CPSCQGRG), and 202 to 209 (CPNCGGAG).

The protein belongs to the DnaJ family. Homodimer. Zn(2+) is required as a cofactor.

Its subcellular location is the cytoplasm. Participates actively in the response to hyperosmotic and heat shock by preventing the aggregation of stress-denatured proteins and by disaggregating proteins, also in an autonomous, DnaK-independent fashion. Unfolded proteins bind initially to DnaJ; upon interaction with the DnaJ-bound protein, DnaK hydrolyzes its bound ATP, resulting in the formation of a stable complex. GrpE releases ADP from DnaK; ATP binding to DnaK triggers the release of the substrate protein, thus completing the reaction cycle. Several rounds of ATP-dependent interactions between DnaJ, DnaK and GrpE are required for fully efficient folding. Also involved, together with DnaK and GrpE, in the DNA replication of plasmids through activation of initiation proteins. This is Chaperone protein DnaJ from Azorhizobium caulinodans (strain ATCC 43989 / DSM 5975 / JCM 20966 / LMG 6465 / NBRC 14845 / NCIMB 13405 / ORS 571).